The following is a 365-amino-acid chain: Chorismate synthase (365 aa).

Arg-47 provides a ligand contact to NADP(+). FMN is bound by residues 124-126 (RAS), Gly-287, 302-306 (KPTAT), and Arg-328. The tract at residues 266–290 (FIKSDDSSKLRTTSNNSGGIQGGIS) is disordered.

Belongs to the chorismate synthase family. As to quaternary structure, homotetramer. It depends on FMNH2 as a cofactor.

The enzyme catalyses 5-O-(1-carboxyvinyl)-3-phosphoshikimate = chorismate + phosphate. Its pathway is metabolic intermediate biosynthesis; chorismate biosynthesis; chorismate from D-erythrose 4-phosphate and phosphoenolpyruvate: step 7/7. Catalyzes the anti-1,4-elimination of the C-3 phosphate and the C-6 proR hydrogen from 5-enolpyruvylshikimate-3-phosphate (EPSP) to yield chorismate, which is the branch point compound that serves as the starting substrate for the three terminal pathways of aromatic amino acid biosynthesis. This reaction introduces a second double bond into the aromatic ring system. The protein is Chorismate synthase of Prochlorococcus marinus (strain MIT 9301).